We begin with the raw amino-acid sequence, 438 residues long: Indole diterpene prenyltransferase paxD (438 aa).

80 to 81 (FM) lines the L-tryptophan pocket. Substrate-binding residues include Arg-102, Lys-190, Arg-264, Lys-266, Tyr-268, Tyr-349, and Tyr-418.

It belongs to the tryptophan dimethylallyltransferase family.

Its pathway is secondary metabolite biosynthesis. Its function is as follows. Indole diterpene prenyltransferase; part of the gene cluster that mediates the biosynthesis of paxilline, a mycotoxin that acts as an inhibitor of mammalian maxi-K channels. PaxG, the geranylgeranyl diphosphate (GGPP) synthase is proposed to catalyze the first step in paxilline biosynthesis. Condensation of indole-3-glycerol phosphate with GGPP by paxC then forms 3-geranylgeranylindole (3-GGI), followed by epoxidation and cyclization of this intermediate (by paxM and paxB) to form paspaline. Paspaline is subsequently converted to 13-desoxypaxilline by paxP, the latter being then converted to paxilline by paxQ. Finally paxilline can be mono- and di-prenylated by paxD. The polypeptide is Indole diterpene prenyltransferase paxD (Penicillium paxilli).